A 340-amino-acid chain; its full sequence is Adenosine deaminase (340 aa).

Zn(2+) contacts are provided by His-15 and His-17. The substrate site is built by His-17, Asp-19, and Gly-172. His-199 serves as a coordination point for Zn(2+). The Proton donor role is filled by Glu-202. Asp-279 provides a ligand contact to Zn(2+).

The protein belongs to the metallo-dependent hydrolases superfamily. Adenosine and AMP deaminases family. Adenosine deaminase subfamily. It depends on Zn(2+) as a cofactor.

The catalysed reaction is adenosine + H2O + H(+) = inosine + NH4(+). It catalyses the reaction 2'-deoxyadenosine + H2O + H(+) = 2'-deoxyinosine + NH4(+). Catalyzes the hydrolytic deamination of adenosine and 2-deoxyadenosine. This is Adenosine deaminase from Streptococcus agalactiae serotype III (strain NEM316).